The sequence spans 292 residues: MRKPIFTGAGVAIITPFTENGVNYDKLGELIEFQIREGIDSIIICGTTGEASTMPDEEHKAVIKYTVEKVNKRVPVIAGTGSNDTIHAVELSKYAEEVGADAILSVTPYYNKTTQKGLYEHFKLIAESIKIPVVLYNVPGRTGLNIEPKTVKQLAEIENIVAIKECNINQVGEIISICPPDFTVYSGNDDMVVPLLALGGKGVISVMANIIPKKTHELVATFLDGNVEESRKIQLSLLNLIKALFIEVSPIPVKAAMNLMGMEVGKCRLPLTDMTEKNFEILKQTLKDYGLI.

Threonine 48 provides a ligand contact to pyruvate. Catalysis depends on tyrosine 136, which acts as the Proton donor/acceptor. The active-site Schiff-base intermediate with substrate is lysine 164. Residue isoleucine 204 participates in pyruvate binding.

It belongs to the DapA family. In terms of assembly, homotetramer; dimer of dimers.

The protein resides in the cytoplasm. It catalyses the reaction L-aspartate 4-semialdehyde + pyruvate = (2S,4S)-4-hydroxy-2,3,4,5-tetrahydrodipicolinate + H2O + H(+). Its pathway is amino-acid biosynthesis; L-lysine biosynthesis via DAP pathway; (S)-tetrahydrodipicolinate from L-aspartate: step 3/4. Functionally, catalyzes the condensation of (S)-aspartate-beta-semialdehyde [(S)-ASA] and pyruvate to 4-hydroxy-tetrahydrodipicolinate (HTPA). This chain is 4-hydroxy-tetrahydrodipicolinate synthase, found in Acetivibrio thermocellus (strain ATCC 27405 / DSM 1237 / JCM 9322 / NBRC 103400 / NCIMB 10682 / NRRL B-4536 / VPI 7372) (Clostridium thermocellum).